The chain runs to 41 residues: Photosystem I reaction center subunit IX (41 aa).

The chain crosses the membrane as a helical span at residues Y7 to I27.

It belongs to the PsaJ family.

The protein resides in the plastid. It localises to the chloroplast thylakoid membrane. May help in the organization of the PsaE and PsaF subunits. This Physcomitrium patens (Spreading-leaved earth moss) protein is Photosystem I reaction center subunit IX.